The following is a 105-amino-acid chain: Large ribosomal subunit protein uL18c (105 aa).

The protein belongs to the universal ribosomal protein uL18 family. In terms of assembly, part of the 50S ribosomal subunit; contacts the 5S rRNA.

It is found in the plastid. It localises to the chloroplast. Functionally, binds 5S rRNA, forms part of the central protuberance of the 50S subunit. In Gracilaria tenuistipitata var. liui (Red alga), this protein is Large ribosomal subunit protein uL18c (rpl18).